The chain runs to 377 residues: Copper-containing nitrite reductase (377 aa).

The segment at residues 1–35 is a signal peptide (tat-type signal); that stretch reads MTNTLQMTRRTMLTGAAVAGALTPILTSGGGNASP. Plastocyanin-like domains lie at 99 to 194 and 259 to 360; these read MTFD…IMVL and GAVG…FKVT. Cu cation contacts are provided by His132, His137, His172, Cys173, His182, Met187, and His343.

It belongs to the multicopper oxidase family. As to quaternary structure, homotrimer. Requires Cu(2+) as cofactor. Cu(+) is required as a cofactor. FAD serves as cofactor. Predicted to be exported by the Tat system. The position of the signal peptide cleavage has not been experimentally proven.

Its subcellular location is the periplasm. The catalysed reaction is nitric oxide + Fe(III)-[cytochrome c] + H2O = Fe(II)-[cytochrome c] + nitrite + 2 H(+). Its pathway is nitrogen metabolism; nitrate reduction (denitrification); dinitrogen from nitrate: step 2/4. This is Copper-containing nitrite reductase (nirK) from Rhizobium sullae (Rhizobium hedysari).